A 266-amino-acid polypeptide reads, in one-letter code: Receptor-like protein 5 (266 aa).

The N-terminal stretch at 1 to 19 is a signal peptide; the sequence is MINYRHIVFCLCVMVVVDS. Residues 20–169 are Extracellular-facing; sequence RLTPYLAAIE…PTRNKNKPTV (150 aa). 2 LRR repeats span residues 93 to 117 and 119 to 143; these read LTSLRVIDLSHNRLKCTIPFEITKL and NLTIVDVSYNQLHGEVPRVRGIVIL. A glycan (N-linked (GlcNAc...) asparagine) is linked at Asn-119. Residues 170–190 form a helical membrane-spanning segment; it reads LVLLLGILVGLVVAGGASFGF. Residues 191–266 lie on the Cytoplasmic side of the membrane; the sequence is YLYRIRKQPK…TNQNPHLPYM (76 aa).

This sequence belongs to the RLP family.

It localises to the cell membrane. The protein is Receptor-like protein 5 of Arabidopsis thaliana (Mouse-ear cress).